The primary structure comprises 185 residues: Ribosome-recycling factor (185 aa).

Belongs to the RRF family.

It is found in the cytoplasm. Functionally, responsible for the release of ribosomes from messenger RNA at the termination of protein biosynthesis. May increase the efficiency of translation by recycling ribosomes from one round of translation to another. In Aliivibrio fischeri (strain MJ11) (Vibrio fischeri), this protein is Ribosome-recycling factor.